The primary structure comprises 409 residues: uncharacterized protein (409 aa).

Disordered regions lie at residues 12-32 (ENTENQKIEATEETAPTLHCP), 133-160 (EVSTQKSWSSEKNWSGLSQGPGTASREQ), and 194-213 (TVSSKAGRNPSGSPEQGLST). Over residues 134-160 (VSTQKSWSSEKNWSGLSQGPGTASREQ) the composition is skewed to polar residues.

This is an uncharacterized protein from Mus musculus (Mouse).